Consider the following 185-residue polypeptide: MINDILKDAENRMSKTLEVLADDLAKIRTGRAHPDILAHVTIDYYGSATPITQVANVTVLDARTLGITPWEKGLAGKIEKAIITSDLGLNPTNLGDSLRVPMPALNEERRKELVKLVKSETESGRVSIRNIRRDANGDIKELLKEKEITEDEAKRAEDNIQKITDKMIAQADALAVKKEQDLMVV.

Belongs to the RRF family.

It is found in the cytoplasm. Its function is as follows. Responsible for the release of ribosomes from messenger RNA at the termination of protein biosynthesis. May increase the efficiency of translation by recycling ribosomes from one round of translation to another. This Francisella philomiragia subsp. philomiragia (strain ATCC 25017 / CCUG 19701 / FSC 153 / O#319-036) protein is Ribosome-recycling factor.